A 1377-amino-acid chain; its full sequence is Pleckstrin homology-like domain family B member 1 (1377 aa).

S51 bears the Phosphoserine mark. The region spanning 64–125 (TVIGSAARDI…LTQGCMLCLG (62 aa)) is the FHA domain. R131 bears the Asymmetric dimethylarginine mark. Positions 150 to 187 (RAPGPPYSPVPAESESLVNGNHTPQTATRGPSACASHS) are disordered. The segment covering 165–178 (SLVNGNHTPQTATR) has biased composition (polar residues). A phosphoserine mark is found at S192, S220, and S223. Disordered regions lie at residues 211-334 (AAGK…LTDS) and 370-535 (GALS…GSFS). Residues 252–273 (SPAFSPLSSPASSGSCASHSPS) show a composition bias toward low complexity. Over residues 288 to 303 (RSSSYHLALQPPQSRP) the composition is skewed to polar residues. A compositionally biased stretch (basic and acidic residues) spans 309 to 322 (ESPRLSRKGGHERP). Phosphoserine is present on residues S324, S334, S381, S404, S430, S443, S461, S470, S489, and S501. Over residues 456–473 (ELPPLSPSLSRRALSPLP) the composition is skewed to low complexity. Positions 481–491 (KLNREVAESPR) are enriched in basic and acidic residues. R512 is modified (omega-N-methylarginine). S518 and S520 each carry phosphoserine. T522 carries the post-translational modification Phosphothreonine. Phosphoserine occurs at positions 533, 539, 551, 555, 563, 578, and 583. The segment covering 653 to 663 (PSRGLAGASGR) has biased composition (low complexity). 3 disordered regions span residues 653–707 (PSRG…APST), 936–1019 (TGPA…GSLP), and 1119–1138 (SMET…DNMS). Residues 677-691 (ESMERSDEENLKEEC) show a composition bias toward basic and acidic residues. At S678 the chain carries Phosphoserine. The stretch at 683 to 809 (DEENLKEECS…TETKLFEDLE (127 aa)) forms a coiled coil. S971 and S1017 each carry phosphoserine. The segment covering 971–992 (SPLPRTRSGPLPSSSGSSSSSS) has biased composition (low complexity). Residues 1009-1018 (LLTQNGTGSL) are compositionally biased toward polar residues. Residues 1144–1208 (DMGKIEEMEK…ARRQQLVEKE (65 aa)) adopt a coiled-coil conformation. Residues 1256–1370 (SKVCRGYLVK…WMDVIVTGAE (115 aa)) form the PH domain.

This chain is Pleckstrin homology-like domain family B member 1 (PHLDB1), found in Homo sapiens (Human).